We begin with the raw amino-acid sequence, 253 residues long: Demethylmenaquinone methyltransferase (253 aa).

Residues Thr-62, Asp-80, 102–103 (DA), and Ser-119 each bind S-adenosyl-L-methionine.

The protein belongs to the class I-like SAM-binding methyltransferase superfamily. MenG/UbiE family.

The catalysed reaction is a 2-demethylmenaquinol + S-adenosyl-L-methionine = a menaquinol + S-adenosyl-L-homocysteine + H(+). It participates in quinol/quinone metabolism; menaquinone biosynthesis; menaquinol from 1,4-dihydroxy-2-naphthoate: step 2/2. Its function is as follows. Methyltransferase required for the conversion of demethylmenaquinol (DMKH2) to menaquinol (MKH2). The chain is Demethylmenaquinone methyltransferase from Paenarthrobacter aurescens (strain TC1).